The sequence spans 325 residues: MAAAVRCMGRALIHHQRHSLSKMVYQTSLCSCSVNIRVPNRHFAAATKSAKKTKKGAKEKTPDEKKDEIEKIKAYPYMEGEPEDDVYLKRLYPRQIYEVEKAVHLLKKFQILDFTSPKQSVYLDLTLDMALGKKKNVEPFTSVLSLPYPFASEINKVAVFTENASEVKIAEENGAAFAGGTSLIQKIWDDEIVADFYVAVPEIMPELNRLRKKLNKKYPKLSRNSIGRDIPKMLELFKNGHEIKVDEERENFLQTKIATLDMSSDQIAANLQAVINEVCRHRPLNLGPFVVRAFLRSSTSEGLLLKIDPLLPKEVKNEESEKEDA.

The transit peptide at 1-50 (MAAAVRCMGRALIHHQRHSLSKMVYQTSLCSCSVNIRVPNRHFAAATKSA) directs the protein to the mitochondrion.

Belongs to the universal ribosomal protein uL1 family. Component of the mitochondrial large ribosomal subunit (mt-LSU). Mature mammalian 55S mitochondrial ribosomes consist of a small (28S) and a large (39S) subunit. The 28S small subunit contains a 12S ribosomal RNA (12S mt-rRNA) and 30 different proteins. The 39S large subunit contains a 16S rRNA (16S mt-rRNA), a copy of mitochondrial valine transfer RNA (mt-tRNA(Val)), which plays an integral structural role, and 52 different proteins.

The protein localises to the mitochondrion. The chain is Large ribosomal subunit protein uL1m (MRPL1) from Homo sapiens (Human).